The primary structure comprises 140 residues: Large ribosomal subunit protein uL14x/uL14z/uL14y (140 aa).

Belongs to the universal ribosomal protein uL14 family.

The chain is Large ribosomal subunit protein uL14x/uL14z/uL14y (RPL23A) from Arabidopsis thaliana (Mouse-ear cress).